A 229-amino-acid polypeptide reads, in one-letter code: Putative germin-like protein 3-4 (229 aa).

Positions 1-31 (MEHSFKTITAGVVFVVLLLQQAPVLIRATDA) are cleaved as a signal peptide. A disulfide bond links C38 and C53. Residues 67–219 (SKIATGGDVN…ALRVDTGVVE (153 aa)) form the Cupin type-1 domain. N-linked (GlcNAc...) asparagine glycans are attached at residues N80 and N83. H116, H118, E123, and H165 together coordinate Mn(2+).

It belongs to the germin family. Oligomer (believed to be a pentamer but probably hexamer).

The protein localises to the secreted. It localises to the extracellular space. It is found in the apoplast. May play a role in plant defense. Probably has no oxalate oxidase activity even if the active site is conserved. The polypeptide is Putative germin-like protein 3-4 (Oryza sativa subsp. japonica (Rice)).